The sequence spans 158 residues: Single-stranded DNA-binding protein 2 (158 aa).

An SSB domain is found at 1–107; the sequence is MNETIVCVVG…IDALAVGHDL (107 aa). A disordered region spans residues 109–158; the sequence is RGTSAFRRPSAKDGEAGVSPAARPEPNWETEPGSQPSVEHQPQPEPAGVT.

As to quaternary structure, homotetramer.

The chain is Single-stranded DNA-binding protein 2 (ssb2) from Streptomyces avermitilis (strain ATCC 31267 / DSM 46492 / JCM 5070 / NBRC 14893 / NCIMB 12804 / NRRL 8165 / MA-4680).